Consider the following 788-residue polypeptide: Integrin beta-6 (788 aa).

An N-terminal signal peptide occupies residues 1 to 21 (MGIELLCFFFLFLGRDDHVRG). Positions 22–71 (GCAMEGAETCGDCLLIGPQCAWCSQENFTHPSGVSERCDTPANLLAKGCQ) constitute a PSI domain. Residues 22–709 (GCAMEGAETC…KDCPKPPNIP (688 aa)) are Extracellular-facing. 19 cysteine pairs are disulfide-bonded: cysteine 23-cysteine 41, cysteine 31-cysteine 454, cysteine 34-cysteine 59, cysteine 44-cysteine 70, cysteine 197-cysteine 204, cysteine 252-cysteine 293, cysteine 394-cysteine 406, cysteine 426-cysteine 452, cysteine 456-cysteine 476, cysteine 467-cysteine 479, cysteine 481-cysteine 490, cysteine 492-cysteine 519, cysteine 502-cysteine 517, cysteine 511-cysteine 522, cysteine 524-cysteine 537, cysteine 539-cysteine 560, cysteine 544-cysteine 558, cysteine 552-cysteine 563, and cysteine 565-cysteine 574. Asparagine 48 and asparagine 97 each carry an N-linked (GlcNAc...) asparagine glycan. The VWFA domain occupies 131–371 (YPVDLYYLMD…QLIISAYEEL (241 aa)). 3 residues coordinate Mg(2+): aspartate 140, serine 142, and serine 144. Ca(2+)-binding residues include serine 144, aspartate 147, aspartate 148, and glutamate 179. Asparagine 235, aspartate 237, proline 239, and glutamate 240 together coordinate Ca(2+). Mg(2+) is bound at residue glutamate 240. N-linked (GlcNAc...) asparagine glycosylation occurs at asparagine 260. Ca(2+) is bound by residues aspartate 271 and lysine 355. Residues asparagine 387, asparagine 396, and asparagine 418 are each glycosylated (N-linked (GlcNAc...) asparagine). I-EGF domains follow at residues 456–491 (CQKE…PHCE), 492–538 (CGED…PYCQ), 539–575 (CDNF…EYCN), and 576–615 (CTTS…PTCE). N-linked (GlcNAc...) asparagine glycans are attached at residues asparagine 463 and asparagine 471. N-linked (GlcNAc...) asparagine glycosylation occurs at asparagine 541. N-linked (GlcNAc...) asparagine glycosylation occurs at asparagine 575. Cystine bridges form between cysteine 576–cysteine 599, cysteine 583–cysteine 597, cysteine 591–cysteine 602, cysteine 604–cysteine 614, cysteine 617–cysteine 620, cysteine 624–cysteine 670, cysteine 630–cysteine 649, cysteine 633–cysteine 645, and cysteine 678–cysteine 702. The N-linked (GlcNAc...) asparagine glycan is linked to asparagine 696. The chain crosses the membrane as a helical span at residues 710 to 730 (MIMLGVSLAILLIGVVLLCIW). Residues 731–758 (KLLVSFHDRKEVAKFEAERSKAKWQTGT) are interaction with HAX1. The Cytoplasmic portion of the chain corresponds to 731–788 (KLLVSFHDRKEVAKFEAERSKAKWQTGTNPLYRGSTSTFKNVTYKHRDKLKTDLSTDG).

Belongs to the integrin beta chain family. Heterodimer of an alpha and a beta subunit. Interacts with FLNB. Interacts with HAX1. ITGAV:ITGB6 interacts with FBN1. ITGAV:ITGB6 interacts with TGFB1.

It is found in the cell membrane. The protein resides in the cell junction. The protein localises to the focal adhesion. Its function is as follows. Integrin alpha-V:beta-6 (ITGAV:ITGB6) is a receptor for fibronectin and cytotactin. It recognizes the sequence R-G-D in its ligands. ITGAV:ITGB6 acts as a receptor for fibrillin-1 (FBN1) and mediates R-G-D-dependent cell adhesion to FBN1. Integrin alpha-V:beta-6 (ITGAV:ITGB6) mediates R-G-D-dependent release of transforming growth factor beta-1 (TGF-beta-1) from regulatory Latency-associated peptide (LAP), thereby playing a key role in TGF-beta-1 activation. This Cavia porcellus (Guinea pig) protein is Integrin beta-6 (ITGB6).